The following is a 163-amino-acid chain: Jun dimerization protein 2 (163 aa).

2 disordered regions span residues 1-20 and 59-89; these read MMPG…PGLG and KRPQ…AARC. Residue Lys65 forms a Glycyl lysine isopeptide (Lys-Gly) (interchain with G-Cter in SUMO2) linkage. The bZIP domain occupies 72–135; that stretch reads EERRKRRREK…QQLILMLNRH (64 aa). The basic motif stretch occupies residues 74-96; sequence RRKRRREKNKVAAARCRNKKKER. Residues 100 to 128 form a leucine-zipper region; sequence LQRESERLELMNAELKTQIEELKLERQQL. Thr148 bears the Phosphothreonine; by MAPK8 mark.

It belongs to the bZIP family. ATF subfamily. Forms a homodimer or heterodimer with JUN, JUNB, JUND, CEBPG and ATF2 thereby inhibiting transactivation by JUN, ATF2 and CEBPG. Binds multiple DNA elements such as cAMP-response element (CRE) and TPA response element (TRE) either as homodimer or heterodimer. Interacts with IRF2BP1. Post-translationally, phosphorylation of Thr-148 by MAPK8 in response to different stress conditions such as, UV irradiation, oxidatives stress and anisomycin treatments. Polyubiquitinated; probably by IRF2BP1. In terms of tissue distribution, ubiquitously expressed in all adult tissues tested as well in embryos.

The protein localises to the nucleus. Functionally, component of the AP-1 transcription factor that represses transactivation mediated by the Jun family of proteins. Involved in a variety of transcriptional responses associated with AP-1, such as UV-induced apoptosis, cell differentiation, tumorigenesis and antitumogeneris. Can also function as a repressor by recruiting histone deacetylase 3/HDAC3 to the promoter region of JUN. May control transcription via direct regulation of the modification of histones and the assembly of chromatin. This chain is Jun dimerization protein 2 (Jdp2), found in Mus musculus (Mouse).